A 138-amino-acid polypeptide reads, in one-letter code: MQRITITLDEELLDVIDRRVATQGYQGRSEAIRDLLRAGMRESEALPDDAACVAVVSYLYDHSTRELPRRLNQTLHAHHDLTRSTLHVHLDAGHCLEVSVLQGESGRIGELSRQLMVERGVEHGQVQVIPAPGQPKVR.

Ni(2+) is bound by residues His76, His87, His89, and Cys95.

It belongs to the transcriptional regulatory CopG/NikR family. Ni(2+) is required as a cofactor.

Its function is as follows. Transcriptional regulator. The sequence is that of Putative nickel-responsive regulator from Pseudomonas putida (strain ATCC 47054 / DSM 6125 / CFBP 8728 / NCIMB 11950 / KT2440).